The chain runs to 131 residues: Large ribosomal subunit protein bL19 (131 aa).

The protein belongs to the bacterial ribosomal protein bL19 family.

This protein is located at the 30S-50S ribosomal subunit interface and may play a role in the structure and function of the aminoacyl-tRNA binding site. This Anaeromyxobacter dehalogenans (strain 2CP-C) protein is Large ribosomal subunit protein bL19.